We begin with the raw amino-acid sequence, 133 residues long: MVKSTIEESVATGRRKQAVSSVRLRPGTGKIDVNGKAFDEYFPLEIQRATILSPLKVLGHTEEFDLIIRINGGGIQGQVIATRLGLARALLKKNGDSKQELKSRGFLTRDPRKKERKKYGHKKARKSFQFSKR.

The segment covering glycine 95–lysine 113 has biased composition (basic and acidic residues). A disordered region spans residues glycine 95–arginine 133. Positions lysine 114–arginine 133 are enriched in basic residues.

The protein belongs to the universal ribosomal protein uS9 family.

The protein is Small ribosomal subunit protein uS9 of Chlamydia felis (strain Fe/C-56) (Chlamydophila felis).